A 157-amino-acid polypeptide reads, in one-letter code: Biotin carboxyl carrier protein of acetyl-CoA carboxylase (157 aa).

Residues 80–156 (YATIVSPMVG…DCGQALMKVE (77 aa)) enclose the Biotinyl-binding domain. An N6-biotinyllysine modification is found at Lys122.

It is found in the plastid. Its subcellular location is the chloroplast. It functions in the pathway lipid metabolism; fatty acid biosynthesis. In terms of biological role, this protein is a component of the acetyl coenzyme A carboxylase complex; first, biotin carboxylase catalyzes the carboxylation of the carrier protein and then the transcarboxylase transfers the carboxyl group to form malonyl-CoA. The protein is Biotin carboxyl carrier protein of acetyl-CoA carboxylase (accB) of Porphyra purpurea (Red seaweed).